The sequence spans 333 residues: MTSKSHWKLLALALVLVVVMVWYSISREDRYIEFFYFPVSEKKEPCFQGEAERQASKIFGNHSREQPIFLQLKDYFWVKTPSAYELPFGTKGSEDLLLRVLAITSYSIPESIQSLECRRCVVVGNGHRLKNSSLGGVINKYDVVIRLNNAPVAGYEGDVGSKTTIRLFYPESAHFDPKIENNPDTLLVLVAFKAMDFHWIETILSDKKRVRKGFWKQPPLIWDVNPKQIRILNPFFMEIAADKLLSLPIQQPRKIKQKPTTGLLAITLALHLCDLVHIAGFGYPDAYNKKQTIHYYEQITLKSMAGSGHNVSQEAVAIKRMLEMGAVKNLTYF.

Over 1 to 8 the chain is Cytoplasmic; sequence MTSKSHWK. A helical; Signal-anchor for type II membrane protein membrane pass occupies residues 9–26; sequence LLALALVLVVVMVWYSIS. The Lumenal segment spans residues 27 to 333; that stretch reads REDRYIEFFY…MGAVKNLTYF (307 aa). N-linked (GlcNAc...) asparagine glycosylation is found at Asn-61, Asn-131, Asn-310, and Asn-329. A disulfide bond links Cys-120 and Cys-273.

This sequence belongs to the glycosyltransferase 29 family.

It localises to the golgi apparatus. The protein localises to the golgi stack membrane. The enzyme catalyses a beta-D-galactosyl-(1-&gt;3)-N-acetyl-beta-D-galactosaminyl derivative + CMP-N-acetyl-beta-neuraminate = an N-acetyl-alpha-neuraminyl-(2-&gt;3)-beta-D-galactosyl-(1-&gt;3)-N-acetyl-beta-D-galactosaminyl derivative + CMP + H(+). The catalysed reaction is a beta-D-galactosyl-(1-&gt;3)-N-acetyl-alpha-D-galactosaminyl derivative + CMP-N-acetyl-beta-neuraminate = an N-acetyl-alpha-neuraminyl-(2-&gt;3)-beta-D-galactosyl-(1-&gt;3)-N-acetyl-alpha-D-galactosaminyl derivative + CMP + H(+). It carries out the reaction a beta-D-galactosyl-(1-&gt;4)-N-acetyl-beta-D-glucosaminyl derivative + CMP-N-acetyl-beta-neuraminate = an N-acetyl-alpha-neuraminyl-(2-&gt;3)-beta-D-galactosyl-(1-&gt;4)-N-acetyl-beta-D-glucosaminyl derivative + CMP + H(+). It catalyses the reaction a ganglioside GM1 (d18:1(4E)) + CMP-N-acetyl-beta-neuraminate = a ganglioside GD1a (d18:1(4E)) + CMP + H(+). The enzyme catalyses a ganglioside GA1 (d18:1(4E)) + CMP-N-acetyl-beta-neuraminate = a ganglioside GM1b (d18:1(4E)) + CMP + H(+). The catalysed reaction is a ganglioside GT1c (d18:1(4E)) + CMP-N-acetyl-beta-neuraminate = a ganglioside GQ1c (d18:1(4E)) + CMP + H(+). It carries out the reaction a neolactoside nLc4Cer + CMP-N-acetyl-beta-neuraminate = a neolactoside IV(3)-alpha-NeuAc-nLc4Cer + CMP + H(+). It catalyses the reaction a neolactoside nLc4Cer(d18:1(4E)) + CMP-N-acetyl-beta-neuraminate = a neolactoside IV(3)-alpha-NeuAc-nLc4Cer(d18:1(4E)) + CMP + H(+). It participates in protein modification; protein glycosylation. The protein operates within glycolipid biosynthesis. Functionally, a beta-galactoside alpha2-3 sialyltransferase involved in terminal sialylation of glycoproteins and glycolipids. Catalyzes the transfer of sialic acid (N-acetyl-neuraminic acid; Neu5Ac) from the nucleotide sugar donor CMP-Neu5Ac onto acceptor Galbeta-(1-&gt;3)-GalNAc- and Galbeta-(1-&gt;4)-GlcNAc-terminated glycoconjugates through an alpha2-3 linkage. Plays a major role in hemostasis. Responsible for sialylation of plasma VWF/von Willebrand factor, preventing its recognition by asialoglycoprotein receptors (ASGPR) and subsequent clearance. Regulates ASGPR-mediated clearance of platelets. Participates in the biosynthesis of the sialyl Lewis X epitopes, both on O- and N-glycans, which are recognized by SELE/E-selectin, SELP/P-selectin and SELL/L-selectin. Essential for selectin-mediated rolling and adhesion of leukocytes during extravasation. Contributes to adhesion and transendothelial migration of neutrophils likely through terminal sialylation of CXCR2. In glycosphingolipid biosynthesis, sialylates GM1 and GA1 gangliosides to form GD1a and GM1b, respectively. Metabolizes brain c-series ganglioside GT1c forming GQ1c. Synthesizes ganglioside LM1 (IV3Neu5Ac-nLc4Cer), a major structural component of peripheral nerve myelin. This is CMP-N-acetylneuraminate-beta-galactosamide-alpha-2,3-sialyltransferase 4 (St3gal4) from Rattus norvegicus (Rat).